Here is a 208-residue protein sequence, read N- to C-terminus: Riboflavin synthase (208 aa).

Lumazine-binding repeat units lie at residues 1 to 97 and 98 to 195; these read MFTG…MGGH and FVQG…EKLV. 2,4-dihydroxypteridine is bound by residues 4-6, 48-50, 62-67, 101-103, K137, 146-148, and 160-165; these read GLV, CLT, GIAPES, GHV, SLT, and MMISYT.

In terms of assembly, homotrimer.

It carries out the reaction 2 6,7-dimethyl-8-(1-D-ribityl)lumazine + H(+) = 5-amino-6-(D-ribitylamino)uracil + riboflavin. It functions in the pathway cofactor biosynthesis; riboflavin biosynthesis; riboflavin from 2-hydroxy-3-oxobutyl phosphate and 5-amino-6-(D-ribitylamino)uracil: step 2/2. Functionally, catalyzes the dismutation of two molecules of 6,7-dimethyl-8-ribityllumazine, resulting in the formation of riboflavin and 5-amino-6-(D-ribitylamino)uracil. The chain is Riboflavin synthase (rib5) from Schizosaccharomyces pombe (strain 972 / ATCC 24843) (Fission yeast).